The primary structure comprises 141 residues: Putative pre-16S rRNA nuclease (141 aa).

The protein belongs to the YqgF nuclease family.

It is found in the cytoplasm. Could be a nuclease involved in processing of the 5'-end of pre-16S rRNA. The polypeptide is Putative pre-16S rRNA nuclease (Roseiflexus sp. (strain RS-1)).